The following is a 627-amino-acid chain: Pentatricopeptide repeat-containing protein At2g15630, mitochondrial (627 aa).

The transit peptide at 1–29 (MRRFTVPCILRHRISILSGAGYSPAAARL) directs the protein to the mitochondrion. PPR repeat units lie at residues 154–188 (STIL…GFYP), 189–223 (KTET…EIKS), 224–258 (NVYT…GIKP), 259–293 (TIVT…GFQP), 294–324 (DMQT…IGLV), 326–360 (DSVS…GMVP), 361–395 (TFYT…GIVL), 396–430 (DSVT…GIQP), 431–465 (TQFT…GMKP), 466–500 (DLVM…SINP), 501–535 (DDVT…GIKP), 536–570 (DHIS…GFNP), and 571–605 (TLLT…GIVP).

This sequence belongs to the PPR family. P subfamily.

It is found in the mitochondrion. The protein is Pentatricopeptide repeat-containing protein At2g15630, mitochondrial of Arabidopsis thaliana (Mouse-ear cress).